A 171-amino-acid chain; its full sequence is Ribosome maturation factor RimP (171 aa).

Belongs to the RimP family.

Its subcellular location is the cytoplasm. Its function is as follows. Required for maturation of 30S ribosomal subunits. This chain is Ribosome maturation factor RimP, found in Anaeromyxobacter sp. (strain K).